The chain runs to 182 residues: Protein SrpB (182 aa).

Helical transmembrane passes span 11-31, 43-63, 73-93, and 116-136; these read WLGL…IGLN, TFTL…QAEG, LSRT…GLIL, and IWIT…LGLI.

Belongs to the MgtC/SapB family.

It localises to the cell membrane. This Synechococcus elongatus (strain ATCC 33912 / PCC 7942 / FACHB-805) (Anacystis nidulans R2) protein is Protein SrpB (srpB).